The following is a 504-amino-acid chain: One cut domain family member 2 (504 aa).

Disordered stretches follow at residues 29 to 95 (LGTL…GTAA), 166 to 189 (KFHH…RLSG), 274 to 332 (EQHL…QLEE), and 485 to 504 (WQDD…CTKA). The span at 35–56 (PAGGGSGGGGGGGGGGGGGGPG) shows a compositional bias: gly residues. Basic residues predominate over residues 168 to 186 (HHPHPHHHPHHHHHHHHQR). Residues 324–410 (VATSGQLEEI…QRMSALRLAA (87 aa)) constitute a DNA-binding region (CUT). Residues 426–485 (QKKSRLVFTDLQRRTLFAIFKENKRPSKEMQITISQQLGLELTTVSNFFMNARRRSLEKW) constitute a DNA-binding region (homeobox). The span at 490–504 (STGGSSSTSSTCTKA) shows a compositional bias: low complexity.

The protein belongs to the CUT homeobox family.

It is found in the nucleus. Functionally, transcriptional activator. Activates the transcription of a number of liver genes such as HNF3B. This is One cut domain family member 2 (ONECUT2) from Homo sapiens (Human).